We begin with the raw amino-acid sequence, 1756 residues long: Protein TIC 214 (1756 aa).

Helical transmembrane passes span 18–38 (VSGPIIIFGLYYGFLATLPFG), 54–74 (GYGIIAISGSITGQLIGFLSM), 79–99 (IYAALWKPYAITLLVVPYMFF), 128–148 (LFMDGLILQLLNPILLANPVL), 163–183 (ISFMISGLCGWLGGHILLTIF), and 210–230 (FSLLILCYCSFYLGRAPLPFL). Residues 1469–1504 (KNKQVEDGQDKNGQVEDQDGQDQDGQVEDQQTDGKK) are disordered. Positions 1471–1482 (KQVEDGQDKNGQ) are enriched in basic and acidic residues. Over residues 1484–1499 (EDQDGQDQDGQVEDQQ) the composition is skewed to acidic residues.

This sequence belongs to the TIC214 family. In terms of assembly, part of the Tic complex.

Its subcellular location is the plastid. It is found in the chloroplast inner membrane. Functionally, involved in protein precursor import into chloroplasts. May be part of an intermediate translocation complex acting as a protein-conducting channel at the inner envelope. The polypeptide is Protein TIC 214 (Pinus thunbergii (Japanese black pine)).